Here is a 446-residue protein sequence, read N- to C-terminus: Tubulin beta-2 chain (446 aa).

8 residues coordinate GTP: Gln11, Glu69, Ser138, Gly142, Thr143, Gly144, Asn204, and Asn226. Glu69 contacts Mg(2+).

It belongs to the tubulin family. As to quaternary structure, dimer of alpha and beta chains. A typical microtubule is a hollow water-filled tube with an outer diameter of 25 nm and an inner diameter of 15 nM. Alpha-beta heterodimers associate head-to-tail to form protofilaments running lengthwise along the microtubule wall with the beta-tubulin subunit facing the microtubule plus end conferring a structural polarity. Microtubules usually have 13 protofilaments but different protofilament numbers can be found in some organisms and specialized cells. Mg(2+) serves as cofactor.

Its subcellular location is the cytoplasm. The protein resides in the cytoskeleton. Its function is as follows. Tubulin is the major constituent of microtubules, a cylinder consisting of laterally associated linear protofilaments composed of alpha- and beta-tubulin heterodimers. Microtubules grow by the addition of GTP-tubulin dimers to the microtubule end, where a stabilizing cap forms. Below the cap, tubulin dimers are in GDP-bound state, owing to GTPase activity of alpha-tubulin. In Hypocrea rufa (Trichoderma viride), this protein is Tubulin beta-2 chain (tub2).